Reading from the N-terminus, the 589-residue chain is Mitoguardin 2 (589 aa).

The next 2 membrane-spanning stretches (helical) occupy residues 11-31 (IIQA…TTFG) and 42-62 (PGLR…ALAA). Residues 87–134 (VPGSVLPVRRSSSAKKGYSRSRVQSPSSKSNDTLSGISSLDPSKHSSS) are disordered. Composition is skewed to low complexity over residues 106-116 (RSRVQSPSSKS) and 123-134 (ISSLDPSKHSSS).

Belongs to the mitoguardin family. As to quaternary structure, homodimer and heterodimer; forms heterodimers with miga1.

The protein resides in the mitochondrion outer membrane. Functionally, regulator of mitochondrial fusion: acts by forming homo- and heterodimers at the mitochondrial outer membrane and facilitating the formation of pld6/MitoPLD dimers. May act by regulating phospholipid metabolism via pld6/MitoPLD. This Xenopus laevis (African clawed frog) protein is Mitoguardin 2.